The sequence spans 490 residues: MQFSTFQKNLDDWQGSSLIFGVLEEEIASQLENIKFVIDPKLLLKKVTQKKFKGEKGEILSFEFLDQNLETLFIVGLGKLKDLNKSDIENSIGNLVRKTVDKNEKMSILLPWEFINSQLEINQLAESVRLSAYKDNRFNKKKDEKKVLKEIEFLNLKKFENISFEETAQICEGVELARRLVAAPPNSLTPQEMSIQASQIAKDHGLGVKILEAKDCEDLGMGAYLAVAKGSDLDPKFIHLTLKSEGPIKEKIALVGKGLTFDSGGYNLKVGASQIEMMKYDMGGSAAVLGAAKALGAIKPKGLEIHFIVASCENMINGSAVHPGDVVKASNGKTIEINNTDAEGRLTLADALTYASNLKPDSIIDLATLTGAIVVALGNDVAGFWSNNDNLANDLKAASAQSGEELWQMPLQKSYKEGLKSHIADMKNTGPRAGGSITAALFLEEFFDKEIKWAHIDIAGTCWTDKNKGINPSGATGFGVKTLVQWIKNK.

Mn(2+)-binding residues include Lys-257 and Asp-262. The active site involves Lys-269. 3 residues coordinate Mn(2+): Asp-281, Asp-341, and Glu-343. Arg-345 is a catalytic residue.

Belongs to the peptidase M17 family. Requires Mn(2+) as cofactor.

It is found in the cytoplasm. The enzyme catalyses Release of an N-terminal amino acid, Xaa-|-Yaa-, in which Xaa is preferably Leu, but may be other amino acids including Pro although not Arg or Lys, and Yaa may be Pro. Amino acid amides and methyl esters are also readily hydrolyzed, but rates on arylamides are exceedingly low.. It carries out the reaction Release of an N-terminal amino acid, preferentially leucine, but not glutamic or aspartic acids.. In terms of biological role, presumably involved in the processing and regular turnover of intracellular proteins. Catalyzes the removal of unsubstituted N-terminal amino acids from various peptides. In Prochlorococcus marinus (strain MIT 9215), this protein is Probable cytosol aminopeptidase.